The following is a 406-amino-acid chain: Cysteine desulfurase (406 aa).

The residue at position 226 (K226) is an N6-(pyridoxal phosphate)lysine. C364 acts as the Cysteine persulfide intermediate in catalysis.

It belongs to the class-V pyridoxal-phosphate-dependent aminotransferase family. Csd subfamily. Homodimer. Interacts with SufE and the SufBCD complex composed of SufB, SufC and SufD. The interaction with SufE is required to mediate the direct transfer of the sulfur atom from the S-sulfanylcysteine. The cofactor is pyridoxal 5'-phosphate.

Its subcellular location is the cytoplasm. The enzyme catalyses (sulfur carrier)-H + L-cysteine = (sulfur carrier)-SH + L-alanine. It carries out the reaction L-selenocysteine + AH2 = hydrogenselenide + L-alanine + A + H(+). It participates in cofactor biosynthesis; iron-sulfur cluster biosynthesis. Functionally, cysteine desulfurases mobilize the sulfur from L-cysteine to yield L-alanine, an essential step in sulfur metabolism for biosynthesis of a variety of sulfur-containing biomolecules. Component of the suf operon, which is activated and required under specific conditions such as oxidative stress and iron limitation. Acts as a potent selenocysteine lyase in vitro, that mobilizes selenium from L-selenocysteine. Selenocysteine lyase activity is however unsure in vivo. The protein is Cysteine desulfurase of Klebsiella pneumoniae subsp. pneumoniae (strain ATCC 700721 / MGH 78578).